A 217-amino-acid chain; its full sequence is Harpin secretion protein HrcR (217 aa).

A run of 4 helical transmembrane segments spans residues 11–31 (FALF…CTCF), 52–72 (PNMA…APVF), 158–178 (IGFL…NVLL), and 185–205 (VAPM…INGW).

Belongs to the FliP/MopC/SpaP family.

The protein resides in the cell membrane. Required for the secretion of harpin. The polypeptide is Harpin secretion protein HrcR (hrcR) (Erwinia amylovora (Fire blight bacteria)).